Reading from the N-terminus, the 543-residue chain is uncharacterized protein (543 aa).

The next 6 helical transmembrane spans lie at 47–67 (FSLL…PSLV), 79–99 (GGMV…AFAL), 126–146 (AFLS…GFAS), 176–196 (IYVA…KFLA), 198–218 (FSSF…ISLA), and 249–269 (FILC…CATI). A glycan (N-linked (GlcNAc...) asparagine) is linked at asparagine 275. 3 helical membrane-spanning segments follow: residues 282-302 (IAII…MITI), 335-355 (AVGV…ALCL), and 384-404 (IPLN…LLML). An N-linked (GlcNAc...) asparagine glycan is attached at asparagine 406. A run of 3 helical transmembrane segments spans residues 410–430 (ISSI…LPLV), 452–472 (ISIV…FPSY), and 480–500 (MNWA…YYYL). A glycan (N-linked (GlcNAc...) asparagine) is linked at asparagine 519.

It belongs to the amino acid-polyamine-organocation (APC) superfamily.

The protein resides in the membrane. This is an uncharacterized protein from Schizosaccharomyces pombe (strain 972 / ATCC 24843) (Fission yeast).